Consider the following 1001-residue polypeptide: TonB-dependent receptor P3 (1001 aa).

The first 26 residues, 1–26 (MTTKNNKQLKSVLFMFLLLIGAYVKA), serve as a signal peptide directing secretion. The TonB box motif lies at 109 to 116 (EEIVVIGY). A TBDR plug domain is found at 120-232 (KKSDVSGSVS…ANGVIMVTTK (113 aa)). Residues 238–1001 (KPTLELNTSY…TFTMGLNMKF (764 aa)) enclose the TBDR beta-barrel domain. Positions 984–1001 (YGSYPNVRTFTMGLNMKF) match the TonB C-terminal box motif.

It belongs to the TonB-dependent receptor family.

It is found in the cell outer membrane. TonB-dependent receptor probably involved in ulvan degradation. Ulvan is the main polysaccharide component of the Ulvales (green seaweed) cell wall. It is composed of disaccharide building blocks comprising 3-sulfated rhamnose (Rha3S) linked to D-glucuronic acid (GlcA), L-iduronic acid (IduA), or D-xylose (Xyl). The TonB-dependent receptor may mediate transport of ulvan oligosaccharides from the surface of the outer membrane to the periplasm for subsequent degradation. This chain is TonB-dependent receptor P3, found in Formosa agariphila (strain DSM 15362 / KCTC 12365 / LMG 23005 / KMM 3901 / M-2Alg 35-1).